A 591-amino-acid polypeptide reads, in one-letter code: Thiol:disulfide interchange protein DsbD 1 (591 aa).

The N-terminal stretch at 1 to 18 (MRRLLTLILLLVALPAGA) is a signal peptide. Residues 19–175 (GLFDSRPGAS…GPLEHKGKRS (157 aa)) lie on the Periplasmic side of the membrane. 2 disulfide bridges follow: Cys134–Cys140 and Cys191–Cys313. The helical transmembrane segment at 176–196 (LLFFFLAGLTLTFTPCVLPML) threads the bilayer. Over 197–213 (PILSGVVLRGRPGGGRG) the chain is Cytoplasmic. The chain crosses the membrane as a helical span at residues 214–234 (FVLSLAYVLPMALCFALLGAL). At 235 to 251 (MGMFGASLNLQAQLQSP) the chain is on the periplasmic side. The helical transmembrane segment at 252 to 272 (WVLVPFAAFFALFAVAMFGFF) threads the bilayer. Over 273 to 295 (ELRLPGFIREPLDRLAGDARGGS) the chain is Cytoplasmic. Residues 296–316 (ILGAATLGVLSSLLVSPCVSA) form a helical membrane-spanning segment. Over 317–338 (PLAASLLYISASGDAWGGGLQL) the chain is Periplasmic. A helical transmembrane segment spans residues 339–359 (FALGLGMGTPLVVFGAGGGAL). Topologically, residues 360 to 365 (LPKSGA) are cytoplasmic. The helical transmembrane segment at 366–386 (WMNGVRNAFGVLLLAVAVWLL) threads the bilayer. Topologically, residues 387–392 (ERVVSG) are periplasmic. The helical transmembrane segment at 393-413 (PVALMLWGMLAGGAGLALGAL) threads the bilayer. The Cytoplasmic segment spans residues 414–423 (EFTPKSAARR). The chain crosses the membrane as a helical span at residues 424 to 444 (LLQLLGLMFLTYAVAAWIGAL). At 445–591 (QGESDPIHPL…ERLRRAATRQ (147 aa)) the chain is on the periplasmic side. Residues 452–589 (HPLGRSVPSI…LAERLRRAAT (138 aa)) enclose the Thioredoxin domain. Cys504 and Cys507 form a disulfide bridge.

The protein belongs to the thioredoxin family. DsbD subfamily.

The protein localises to the cell inner membrane. It carries out the reaction [protein]-dithiol + NAD(+) = [protein]-disulfide + NADH + H(+). The enzyme catalyses [protein]-dithiol + NADP(+) = [protein]-disulfide + NADPH + H(+). Functionally, required to facilitate the formation of correct disulfide bonds in some periplasmic proteins and for the assembly of the periplasmic c-type cytochromes. Acts by transferring electrons from cytoplasmic thioredoxin to the periplasm. This transfer involves a cascade of disulfide bond formation and reduction steps. This chain is Thiol:disulfide interchange protein DsbD 1, found in Pseudomonas aeruginosa (strain ATCC 15692 / DSM 22644 / CIP 104116 / JCM 14847 / LMG 12228 / 1C / PRS 101 / PAO1).